Reading from the N-terminus, the 268-residue chain is Trans-aconitate 2-methyltransferase (268 aa).

Belongs to the methyltransferase superfamily. Tam family.

Its subcellular location is the cytoplasm. It carries out the reaction trans-aconitate + S-adenosyl-L-methionine = (E)-3-(methoxycarbonyl)pent-2-enedioate + S-adenosyl-L-homocysteine. In terms of biological role, catalyzes the S-adenosylmethionine monomethyl esterification of trans-aconitate. This chain is Trans-aconitate 2-methyltransferase, found in Delftia acidovorans (strain DSM 14801 / SPH-1).